We begin with the raw amino-acid sequence, 340 residues long: MITLQNVVKEYTSRNNKVLAVDHVDLEIEQGEIFGVVGYSGAGKSTLIRMFNGLELPSAGTVEVDNLLISQIRGSKLRKARQQIGMIFQHFNLLWSRTVAENIAFPLEIAGVRGEKRRFRVNELIRLVGLEGKENAYPSELSGGQKQRVGIARALANNPKVLLCDEATSALDPQTTDEVLELLLDINKRLHLTIIVITHEMHVIRKICNRVAVMENGKVVELGDVLDVFRHPQEKVTQRFVRQVTDSDETEELIHLLLDNYAEGKIVKLLFMSENATQPVISQVAKENDVMLNVLHGNLTQTQNGAYGTLYVQVLGTEDAINASLTQLRQLKVETEVLER.

In terms of domain architecture, ABC transporter spans 2 to 241 (ITLQNVVKEY…PQEKVTQRFV (240 aa)). Residue 38–45 (GYSGAGKS) participates in ATP binding.

It belongs to the ABC transporter superfamily. Methionine importer (TC 3.A.1.24) family. In terms of assembly, the complex is composed of two ATP-binding proteins (MetN), two transmembrane proteins (MetI) and a solute-binding protein (MetQ).

It localises to the cell membrane. It catalyses the reaction L-methionine(out) + ATP + H2O = L-methionine(in) + ADP + phosphate + H(+). It carries out the reaction D-methionine(out) + ATP + H2O = D-methionine(in) + ADP + phosphate + H(+). Functionally, part of the ABC transporter complex MetNIQ involved in methionine import. Responsible for energy coupling to the transport system. The chain is Methionine import ATP-binding protein MetN 2 from Listeria monocytogenes serotype 4b (strain F2365).